A 222-amino-acid chain; its full sequence is ER membrane protein complex subunit 7 homolog (222 aa).

The signal sequence occupies residues 1–16; that stretch reads MKSILLLFSLIVLGSA. At 17 to 145 the chain is on the extracellular side; that stretch reads TEEVSRTEQT…RKREEWRITD (129 aa). Residues 146–166 traverse the membrane as a helical segment; that stretch reads MLFSPMVLMLVVPLVVMLILP. Topologically, residues 167 to 222 are cytoplasmic; the sequence is KMTANDPELKKEMENMQMPKVDMPDVGEMMANFFGGSAPAKKKAVTGGSGSGQRRK.

This sequence belongs to the EMC7 family.

It is found in the membrane. The sequence is that of ER membrane protein complex subunit 7 homolog from Caenorhabditis elegans.